The following is a 619-amino-acid chain: Translation initiation factor IF-2 (619 aa).

Residues 120–289 (PRPPIVTIMG…ILLLGEVEGY (170 aa)) form the tr-type G domain. The G1 stretch occupies residues 129–136 (GHVDHGKT). GTP is bound at residue 129–136 (GHVDHGKT). The G2 stretch occupies residues 154–158 (GITQK). The G3 stretch occupies residues 176–179 (DTPG). Residues 176 to 180 (DTPGH) and 230 to 233 (NKMD) each bind GTP. A G4 region spans residues 230 to 233 (NKMD). A G5 region spans residues 266-268 (SAL).

It belongs to the TRAFAC class translation factor GTPase superfamily. Classic translation factor GTPase family. IF-2 subfamily.

The protein resides in the cytoplasm. In terms of biological role, one of the essential components for the initiation of protein synthesis. Protects formylmethionyl-tRNA from spontaneous hydrolysis and promotes its binding to the 30S ribosomal subunits. Also involved in the hydrolysis of GTP during the formation of the 70S ribosomal complex. The protein is Translation initiation factor IF-2 (infB) of Mycoplasma genitalium (strain ATCC 33530 / DSM 19775 / NCTC 10195 / G37) (Mycoplasmoides genitalium).